The primary structure comprises 287 residues: ATP synthase gamma chain (287 aa).

Belongs to the ATPase gamma chain family. F-type ATPases have 2 components, CF(1) - the catalytic core - and CF(0) - the membrane proton channel. CF(1) has five subunits: alpha(3), beta(3), gamma(1), delta(1), epsilon(1). CF(0) has three main subunits: a, b and c.

It is found in the cell membrane. Functionally, produces ATP from ADP in the presence of a proton gradient across the membrane. The gamma chain is believed to be important in regulating ATPase activity and the flow of protons through the CF(0) complex. This chain is ATP synthase gamma chain, found in Geobacillus stearothermophilus (Bacillus stearothermophilus).